The sequence spans 369 residues: Cobalt-precorrin-5B C(1)-methyltransferase (369 aa).

The protein belongs to the CbiD family.

It carries out the reaction Co-precorrin-5B + S-adenosyl-L-methionine = Co-precorrin-6A + S-adenosyl-L-homocysteine. It functions in the pathway cofactor biosynthesis; adenosylcobalamin biosynthesis; cob(II)yrinate a,c-diamide from sirohydrochlorin (anaerobic route): step 6/10. Its function is as follows. Catalyzes the methylation of C-1 in cobalt-precorrin-5B to form cobalt-precorrin-6A. The polypeptide is Cobalt-precorrin-5B C(1)-methyltransferase (Leptospira borgpetersenii serovar Hardjo-bovis (strain JB197)).